The following is a 56-amino-acid chain: UPF0391 membrane protein PSHAa0537 (56 aa).

Transmembrane regions (helical) follow at residues 6–26 (ITFL…IAGA) and 27–47 (AAGI…ISLV).

It belongs to the UPF0391 family.

The protein localises to the cell membrane. This chain is UPF0391 membrane protein PSHAa0537, found in Pseudoalteromonas translucida (strain TAC 125).